Reading from the N-terminus, the 294-residue chain is Shikimate kinase (294 aa).

87–97 contributes to the ATP binding site; sequence PLAGGLKSSSA.

The protein belongs to the GHMP kinase family. Archaeal shikimate kinase subfamily.

The protein resides in the cytoplasm. It carries out the reaction shikimate + ATP = 3-phosphoshikimate + ADP + H(+). It participates in metabolic intermediate biosynthesis; chorismate biosynthesis; chorismate from D-erythrose 4-phosphate and phosphoenolpyruvate: step 5/7. The polypeptide is Shikimate kinase (aroK) (Methanosarcina acetivorans (strain ATCC 35395 / DSM 2834 / JCM 12185 / C2A)).